Reading from the N-terminus, the 304-residue chain is Non-specific ribonucleoside hydrolase RihC (304 aa).

H233 is an active-site residue.

It belongs to the IUNH family. RihC subfamily.

Functionally, hydrolyzes both purine and pyrimidine ribonucleosides with a broad-substrate specificity. This is Non-specific ribonucleoside hydrolase RihC from Shigella boydii serotype 4 (strain Sb227).